Consider the following 451-residue polypeptide: uncharacterized protein (451 aa).

An N-terminal signal peptide occupies residues 1–18; that stretch reads MRTRITLALAVLLLLLAG. The N-palmitoyl cysteine moiety is linked to residue Cys-19. Cys-19 carries S-diacylglycerol cysteine lipidation. The segment at 424–451 is disordered; sequence TSADPPPGVPRAGKRNIRDATSRLPSTP.

The protein resides in the cell membrane. Functionally, may participate in oleandomycin glycosylation and secretion during antibiotic production. This is an uncharacterized protein from Streptomyces antibioticus.